Reading from the N-terminus, the 257-residue chain is Ribosome-inactivating protein charybdin (257 aa).

Residue Glu-167 is part of the active site. An intrachain disulfide couples Cys-217 to Cys-254.

This sequence belongs to the ribosome-inactivating protein family. Type 1 RIP subfamily.

The enzyme catalyses Endohydrolysis of the N-glycosidic bond at one specific adenosine on the 28S rRNA.. Inhibits translation in rabbit reticulocytes. This is Ribosome-inactivating protein charybdin from Drimia maritima (Sea squill).